A 20-amino-acid chain; its full sequence is Superoxide dismutase [Fe] (20 aa).

Belongs to the iron/manganese superoxide dismutase family. In terms of assembly, homodimer. It depends on Fe cation as a cofactor.

It localises to the periplasm. It carries out the reaction 2 superoxide + 2 H(+) = H2O2 + O2. Destroys superoxide anion radicals which are normally produced within the cells and which are toxic to biological systems. The sequence is that of Superoxide dismutase [Fe] (sodB) from Photobacterium damsela subsp. piscicida (Pasteurella piscicida).